Reading from the N-terminus, the 324-residue chain is D-alanine--D-alanine ligase (324 aa).

An ATP-grasp domain is found at 120–322; that stretch reads NNYLRGFGVE…LKEILTEIIE (203 aa). 149-204 provides a ligand contact to ATP; sequence IDKLGLPLIVKPNDGGSSFGVTKVTNITQIQLAIRNAFNEGEGVLIESFIPGTEIT. Aspartate 276, glutamate 289, and asparagine 291 together coordinate Mg(2+).

It belongs to the D-alanine--D-alanine ligase family. It depends on Mg(2+) as a cofactor. The cofactor is Mn(2+).

It localises to the cytoplasm. It carries out the reaction 2 D-alanine + ATP = D-alanyl-D-alanine + ADP + phosphate + H(+). Its pathway is cell wall biogenesis; peptidoglycan biosynthesis. Its function is as follows. Cell wall formation. The protein is D-alanine--D-alanine ligase of Azobacteroides pseudotrichonymphae genomovar. CFP2.